The following is a 231-amino-acid chain: Putative histone H1.9 (231 aa).

An H15 domain is found at 113–177; it reads QKPSTSKVIL…GSAGSFTLGK (65 aa). Residue Ser135 is modified to Phosphoserine. A disordered region spans residues 177 to 214; the sequence is KKQASKSKLKVKRQRQQRWRSGQRPFGQHRSLLGSKQG. The segment covering 179 to 194 has biased composition (basic residues); sequence QASKSKLKVKRQRQQR.

Belongs to the histone H1/H5 family. Expressed exclusively in the testis.

Its subcellular location is the nucleus. It is found in the chromosome. DNA-binding protein that may be implicated in chromatin remodeling and/or transcriptional regulation during spermiogenesis, the process of spermatid maturation into spermatozoa. The polypeptide is Putative histone H1.9 (Homo sapiens (Human)).